Consider the following 206-residue polypeptide: Ras-related protein Rab-18 (206 aa).

Met1 carries the post-translational modification N-acetylmethionine. Residues Ser17, Gly20, Lys21, Ser22, Ser23, Asp34, Pro35, Thr40, Gly66, Lys123, and Asp125 each contribute to the GTP site. Ser22 is a binding site for Mg(2+). Short sequence motifs (switch) lie at residues 31-45 (DTFDPELAATIGVDF) and 63-80 (DTAGQERFRTLTPSYYRG). Thr40 contacts Mg(2+). Ser144 carries the post-translational modification Phosphoserine. Residue Ala152 participates in GTP binding. The S-palmitoyl cysteine moiety is linked to residue Cys199. Cys203 carries the post-translational modification Cysteine methyl ester. Residue Cys203 is the site of S-geranylgeranyl cysteine attachment. A propeptide spans 204–206 (SVL) (removed in mature form).

This sequence belongs to the small GTPase superfamily. Rab family. In terms of assembly, interacts (in GTP-bound form) with ZFYVE1. Interacts with ZW10 and this interaction is enhanced in the presence of ZFYVE1. Interacts with BSCL2. Mg(2+) is required as a cofactor.

The protein localises to the endoplasmic reticulum membrane. It is found in the golgi apparatus. Its subcellular location is the cis-Golgi network membrane. It localises to the lipid droplet. The protein resides in the apical cell membrane. The enzyme catalyses GTP + H2O = GDP + phosphate + H(+). Regulated by guanine nucleotide exchange factors (GEFs) which promote the exchange of bound GDP for free GTP. Regulated by GTPase activating proteins (GAPs) which increase the GTP hydrolysis activity at the ER membrane. Inhibited by GDP dissociation inhibitors (GDIs) which prevent Rab-GDP dissociation. Its function is as follows. The small GTPases Rab are key regulators of intracellular membrane trafficking, from the formation of transport vesicles to their fusion with membranes. Rabs cycle between an inactive GDP-bound form and an active GTP-bound form that is able to recruit to membranes different sets of downstream effectors directly responsible for vesicle formation, movement, tethering and fusion. RAB18 is required for the localization of ZFYVE1 to lipid droplets and for its function in mediating the formation of endoplasmic reticulum-lipid droplets (ER-LD) contacts. Also required for maintaining endoplasmic reticulum structure. Plays a role in apical endocytosis/recycling. Plays a key role in eye and brain development and neurodegeneration. This Rattus norvegicus (Rat) protein is Ras-related protein Rab-18.